Reading from the N-terminus, the 273-residue chain is Undecaprenyl-diphosphatase (273 aa).

The next 8 helical transmembrane spans lie at 18 to 40 (GLTE…LLGF), 45 to 65 (AKTF…VVFW), 92 to 112 (GHIL…HEQI), 114 to 134 (AIFA…LLLA), 151 to 171 (LTYL…WPGF), 189 to 209 (YAAS…ATVL), 225 to 245 (MFAI…KFFL), and 253 to 273 (FVPF…ILIG).

The protein belongs to the UppP family.

The protein localises to the cell inner membrane. The catalysed reaction is di-trans,octa-cis-undecaprenyl diphosphate + H2O = di-trans,octa-cis-undecaprenyl phosphate + phosphate + H(+). Its function is as follows. Catalyzes the dephosphorylation of undecaprenyl diphosphate (UPP). Confers resistance to bacitracin. The protein is Undecaprenyl-diphosphatase of Sodalis glossinidius (strain morsitans).